Here is a 746-residue protein sequence, read N- to C-terminus: Ring assembly protein 3 (746 aa).

The protein localises to the cytoplasm. In terms of biological role, essential for actinomyosin ring assembly during cytokinesis. Has a role, in conjunction with F-actin, in assembling myosin II-containing proteins, such as myo2, at the division site. The chain is Ring assembly protein 3 (rng3) from Schizosaccharomyces pombe (strain 972 / ATCC 24843) (Fission yeast).